We begin with the raw amino-acid sequence, 451 residues long: Aminodeoxychorismate synthase component 1 (451 aa).

L-tryptophan-binding positions include serine 34, 41-44 (HNRF), and 238-240 (PFS). Catalysis depends on glutamate 256, which acts as the Proton donor. Lysine 272 acts as the N6-(4-deoxychorismate)-lysine intermediate in catalysis.

The protein belongs to the anthranilate synthase component I family. As to quaternary structure, monomer. Heterodimer consisting of two non-identical subunits: a glutamine amidotransferase subunit (PabA) and a aminodeoxychorismate synthase subunit (PabB). Requires Mg(2+) as cofactor.

The catalysed reaction is chorismate + L-glutamine = 4-amino-4-deoxychorismate + L-glutamate. It functions in the pathway cofactor biosynthesis; tetrahydrofolate biosynthesis; 4-aminobenzoate from chorismate: step 1/2. In terms of biological role, part of a heterodimeric complex that catalyzes the two-step biosynthesis of 4-amino-4-deoxychorismate (ADC), a precursor of p-aminobenzoate (PABA) and tetrahydrofolate. In the first step, a glutamine amidotransferase (PabA) generates ammonia as a substrate that, along with chorismate, is used in the second step, catalyzed by aminodeoxychorismate synthase (PabB) to produce ADC. The sequence is that of Aminodeoxychorismate synthase component 1 (pabB) from Klebsiella aerogenes (Enterobacter aerogenes).